The following is a 99-amino-acid chain: Prostate and testis expressed protein 14 (99 aa).

The N-terminal stretch at 1 to 21 (MEKYLLLLLLGIFLRVGFLQA) is a signal peptide. Positions 22 to 99 (LTCVSCGRLN…CDHQNLCNKP (78 aa)) constitute a UPAR/Ly6 domain. Cystine bridges form between cysteine 24–cysteine 51, cysteine 27–cysteine 36, cysteine 43–cysteine 69, cysteine 73–cysteine 89, and cysteine 90–cysteine 96. An N-linked (GlcNAc...) asparagine glycan is attached at asparagine 31. N-linked (GlcNAc...) asparagine glycosylation occurs at asparagine 75.

The protein belongs to the PATE family. As to quaternary structure, monomer. Glycosylated. As to expression, predominantly expressed in the seminal vesicles. Expressed in prostate, and to a lesser extent in the cauda epididymis.

The protein resides in the secreted. This Mus musculus (Mouse) protein is Prostate and testis expressed protein 14.